Consider the following 311-residue polypeptide: Methionyl-tRNA formyltransferase (311 aa).

109–112 (SLLP) contacts (6S)-5,6,7,8-tetrahydrofolate.

Belongs to the Fmt family.

It carries out the reaction L-methionyl-tRNA(fMet) + (6R)-10-formyltetrahydrofolate = N-formyl-L-methionyl-tRNA(fMet) + (6S)-5,6,7,8-tetrahydrofolate + H(+). Its function is as follows. Attaches a formyl group to the free amino group of methionyl-tRNA(fMet). The formyl group appears to play a dual role in the initiator identity of N-formylmethionyl-tRNA by promoting its recognition by IF2 and preventing the misappropriation of this tRNA by the elongation apparatus. This chain is Methionyl-tRNA formyltransferase, found in Acetivibrio thermocellus (strain ATCC 27405 / DSM 1237 / JCM 9322 / NBRC 103400 / NCIMB 10682 / NRRL B-4536 / VPI 7372) (Clostridium thermocellum).